The following is a 741-amino-acid chain: Homeobox protein AHox1 (741 aa).

7 disordered regions span residues 1 to 30 (MEKMHSKSVSPVPFNNSNNTSLGGLRKSSS), 61 to 96 (KRRLLDPQNKKKQNRFERYSSSNHAQEQSSEENFCR), 146 to 183 (VNPLSKYFKPSSNDQLGARRTATSFSSSSEASDSKSCC), 203 to 226 (ADSDWSEDATGNEADDPDDHINQD), 357 to 383 (KTEESLRSPSETKQYSPDASTFYPIRT), 476 to 501 (FDFPPKFGSNNSSTDKPEQEDNNPQT), and 616 to 642 (QYGHMSSSQNPHSETQNRSEEVRGTVK). Residues 7-19 (KSVSPVPFNNSNN) show a composition bias toward low complexity. Basic and acidic residues predominate over residues 63–78 (RLLDPQNKKKQNRFER). Polar residues predominate over residues 79 to 92 (YSSSNHAQEQSSEE). The span at 169–181 (SFSSSSEASDSKS) shows a compositional bias: low complexity. Residues 363–375 (RSPSETKQYSPDA) are compositionally biased toward polar residues. Over residues 616-629 (QYGHMSSSQNPHSE) the composition is skewed to polar residues. Residues 630–639 (TQNRSEEVRG) are compositionally biased toward basic and acidic residues. The homeobox DNA-binding region spans 645–704 (RKWNRAVFSLMQRRGLEKSFQSQKYVAKPERRKLADALSLTDAQVKIWFQNRRMKWRQEI). The disordered stretch occupies residues 722-741 (EIEKEKTQTPSDEGEVINVD).

It belongs to the H2.0 homeobox family. Expressed in the tissues of endodermal origin.

Its subcellular location is the nucleus. The protein is Homeobox protein AHox1 (AHOX1) of Halocynthia roretzi (Sea squirt).